The following is a 140-amino-acid chain: MSTEYRTGREGEFTYRGHDLDELQEMSLEDVAELLPARQRRTITRGLSEEHHKVLAEARESGTEETANNPIRTHLRDMPVLPEFVGLTFAVYTGQEFERVEVQPEMIGHYLGEFQLTRSSVEHGQAGIGATRSSKFVPLK.

The segment at 55–74 (LAEARESGTEETANNPIRTH) is disordered.

Belongs to the universal ribosomal protein uS19 family.

Functionally, protein S19 forms a complex with S13 that binds strongly to the 16S ribosomal RNA. This is Small ribosomal subunit protein uS19 from Halobacterium salinarum (strain ATCC 29341 / DSM 671 / R1).